A 380-amino-acid polypeptide reads, in one-letter code: Glutamate 5-kinase (380 aa).

Position 20 (lysine 20) interacts with ATP. Substrate contacts are provided by serine 59, aspartate 146, and asparagine 158. 220 to 226 (TGGMYSK) contacts ATP. The PUA domain maps to 285–363 (SGTVTVDEGA…HEVAAILGDA (79 aa)).

The protein belongs to the glutamate 5-kinase family.

Its subcellular location is the cytoplasm. The catalysed reaction is L-glutamate + ATP = L-glutamyl 5-phosphate + ADP. Its pathway is amino-acid biosynthesis; L-proline biosynthesis; L-glutamate 5-semialdehyde from L-glutamate: step 1/2. Its function is as follows. Catalyzes the transfer of a phosphate group to glutamate to form L-glutamate 5-phosphate. The protein is Glutamate 5-kinase of Nitratidesulfovibrio vulgaris (strain ATCC 29579 / DSM 644 / CCUG 34227 / NCIMB 8303 / VKM B-1760 / Hildenborough) (Desulfovibrio vulgaris).